A 960-amino-acid chain; its full sequence is Dynamin-like GTPase OPA1, mitochondrial (960 aa).

The N-terminal 87 residues, 1-87, are a transit peptide targeting the mitochondrion; that stretch reads MWRLRRAAVA…IKYGYQPRRN (87 aa). The Mitochondrial matrix segment spans residues 88–96; it reads FWPARLATR. A helical membrane pass occupies residues 97–113; it reads LLKLRYLILGSAVGGGY. The Mitochondrial intermembrane segment spans residues 114–770; it reads TAKKTFDQWK…NAIENMVGPD (657 aa). 2 consecutive short sequence motifs (LQQQIQ motif) follow at residues 181–186 and 217–222; these read DFFTSG and QLQEEL. Residues 210–254 adopt a coiled-coil conformation; sequence SDKEKIDQLQEELLHTQLKYQRILERLEKENKELRKLVLQKDDKG. Lys-228 is subject to N6-acetyllysine. Residues 235-240 carry the LQQQIQ motif motif; that stretch reads RLEKEN. Residues 285–561 form the Dynamin-type G domain; that stretch reads QDHLPRVVVV…FWKMVRESVE (277 aa). The interval 295–302 is G1 motif; that stretch reads GDQSAGKT. Ser-298, Gly-300, Lys-301, Thr-302, Ser-303, and Gly-317 together coordinate GTP. A Mg(2+)-binding site is contributed by Thr-302. Residues 321–324 are G2 motif; it reads MMTR. Mg(2+) is bound by residues Thr-323 and Asp-398. A G3 motif region spans residues 398 to 401; that stretch reads DLPG. Residues 467-470 are G4 motif; sequence TKVD. 5 residues coordinate GTP: Lys-468, Asp-470, Thr-503, Gly-506, and Asn-507. The interval 501–504 is G5 motif; sequence VVTG. Stalk region stretches follow at residues 589–836 and 874–928; these read DRNE…IKDT and CNDV…IKLL. The paddle region stretch occupies residues 736-856; the sequence is SDKQQWDAAI…KTALNHCNLC (121 aa). An intramembrane segment occupies 771-781; sequence WKKRWLYWKNR. Topologically, residues 782–960 are mitochondrial intermembrane; the sequence is TQEQCVHNET…AFIEALHQEK (179 aa). Cys-856 and Cys-874 are disulfide-bonded. A coiled-coil region spans residues 895–960; that stretch reads RQQLTNTEVR…AFIEALHQEK (66 aa).

It belongs to the TRAFAC class dynamin-like GTPase superfamily. Dynamin/Fzo/YdjA family. In terms of assembly, oligomeric complex consisting of membrane-bound and soluble forms of OPA1. Interacts with RCC1L; RCC1L acts as a guanine nucleotide exchange factor (GEF) for OPA1 by exchanging bound GDP for free GTP. Interacts with CHCHD3 and IMMT; these interactions occur preferentially with soluble OPA1 forms. Interacts with PRELID1. Cleaved by OMA1 or YME1L downstream of the transmembrane region in response to different signals to generate soluble forms. Cleaved by OMA1 at position S1 following stress conditions, generating the short soluble form (Dynamin-like GTPase OPA1, short form; S-OPA1). AFG3L2 is involved in the regulation of OMA1-dependent processing of OPA1. PARL-dependent proteolytic processing releases an antiapoptotic soluble form not required for mitochondrial fusion. Post-translationally, cleavage at position S2 by YME1L is required to mediate oxidative phosphorylation (OXPHOS)-induced mitochondrial fusion. Cleavage occurs in the sequence motif Leu-Gln-Gln-Gln-Ile-Gln (LQQQIQ). In terms of processing, cleavage at position S2 by YME1L is required to mediate oxidative phosphorylation (OXPHOS)-induced mitochondrial fusion. Cleavage occurs in the sequence motif Leu-Gln-Gln-Gln-Ile-Gln (LQQQIQ). Cleavage at position S3 by YME1L is required for membrane tubulation. Cleavage at position S3 by YME1L is required for membrane tubulation. Highly expressed in retina. Also expressed in brain, testis, heart and skeletal muscle. Low levels of all isoforms expressed in a variety of tissues. In terms of tissue distribution, expressed in retina, skeletal muscle, heart, lung, ovary, colon, thyroid gland, leukocytes and fetal brain. Low levels of all isoforms expressed in a variety of tissues. As to expression, isoform 2 expressed in colon, liver, kidney, thyroid gland and leukocytes.

The protein localises to the mitochondrion inner membrane. Its subcellular location is the mitochondrion intermembrane space. The enzyme catalyses GTP + H2O = GDP + phosphate + H(+). Its activity is regulated as follows. Activated by guanine nucleotide exchange factor RCC1L. Its function is as follows. Dynamin-related GTPase that is essential for normal mitochondrial morphology by mediating fusion of the mitochondrial inner membranes, regulating cristae morphology and maintaining respiratory chain function. Exists in two forms: the transmembrane, long form (Dynamin-like GTPase OPA1, long form; L-OPA1), which is tethered to the inner mitochondrial membrane, and the short soluble form (Dynamin-like GTPase OPA1, short form; S-OPA1), which results from proteolytic cleavage and localizes in the intermembrane space. Both forms (L-OPA1 and S-OPA1) cooperate to catalyze the fusion of the mitochondrial inner membrane. The equilibrium between L-OPA1 and S-OPA1 is essential: excess levels of S-OPA1, produced by cleavage by OMA1 following loss of mitochondrial membrane potential, lead to an impaired equilibrium between L-OPA1 and S-OPA1, inhibiting mitochondrial fusion. The balance between L-OPA1 and S-OPA1 also influences cristae shape and morphology. Involved in remodeling cristae and the release of cytochrome c during apoptosis. Proteolytic processing by PARL in response to intrinsic apoptotic signals may lead to disassembly of OPA1 oligomers and release of the caspase activator cytochrome C (CYCS) into the mitochondrial intermembrane space. Acts as a regulator of T-helper Th17 cells, which are characterized by cells with fused mitochondria with tight cristae, by mediating mitochondrial membrane remodeling: OPA1 is required for interleukin-17 (IL-17) production. Its role in mitochondrial morphology is required for mitochondrial genome maintenance. Constitutes the transmembrane long form (L-OPA1) that plays a central role in mitochondrial inner membrane fusion and cristae morphology. L-OPA1 and the soluble short form (S-OPA1) form higher-order helical assemblies that coordinate the fusion of mitochondrial inner membranes. Inner membrane-anchored L-OPA1 molecules initiate membrane remodeling by recruiting soluble S-OPA1 to rapidly polymerize into a flexible cylindrical scaffold encaging the mitochondrial inner membrane. Once at the membrane surface, the formation of S-OPA1 helices induce bilayer curvature. OPA1 dimerization through the paddle region, which inserts into cardiolipin-containing membrane, promotes GTP hydrolysis and the helical assembly of a flexible OPA1 lattice on the membrane, which drives membrane curvature and mitochondrial fusion. Plays a role in the maintenance and remodeling of mitochondrial cristae, some invaginations of the mitochondrial inner membrane that provide an increase in the surface area. Probably acts by forming helical filaments at the inside of inner membrane tubes with the shape and dimensions of crista junctions. The equilibrium between L-OPA1 and S-OPA1 influences cristae shape and morphology: increased L-OPA1 levels promote cristae stacking and elongated mitochondria, while increased S-OPA1 levels correlated with irregular cristae packing and round mitochondria shape. In terms of biological role, constitutes the soluble short form (S-OPA1) generated by cleavage by OMA1, which plays a central role in mitochondrial inner membrane fusion and cristae morphology. The transmembrane long form (L-OPA1) and the S-OPA1 form higher-order helical assemblies that coordinate the fusion of mitochondrial inner membranes. Inner membrane-anchored L-OPA1 molecules initiate membrane remodeling by recruiting soluble S-OPA1 to rapidly polymerize into a flexible cylindrical scaffold encaging the mitochondrial inner membrane. Once at the membrane surface, the formation of S-OPA1 helices induce bilayer curvature. OPA1 dimerization through the paddle region, which inserts into cardiolipin-containing membrane, promotes GTP hydrolysis and the helical assembly of a flexible OPA1 lattice on the membrane, which drives membrane curvature and mitochondrial fusion. Excess levels of S-OPA1 produced by cleavage by OMA1 following stress conditions that induce loss of mitochondrial membrane potential, lead to an impaired equilibrium between L-OPA1 and S-OPA1, thereby inhibiting mitochondrial fusion. Involved in mitochondrial safeguard in response to transient mitochondrial membrane depolarization by mediating flickering: cleavage by OMA1 leads to excess production of S-OPA1, preventing mitochondrial hyperfusion. Plays a role in the maintenance and remodeling of mitochondrial cristae, some invaginations of the mitochondrial inner membrane that provide an increase in the surface area. Probably acts by forming helical filaments at the inside of inner membrane tubes with the shape and dimensions of crista junctions. The equilibrium between L-OPA1 and S-OPA1 influences cristae shape and morphology: increased L-OPA1 levels promote cristae stacking and elongated mitochondria, while increased S-OPA1 levels correlated with irregular cristae packing and round mitochondria shape. Functionally, coexpression of isoform 1 with shorter alternative products is required for optimal activity in promoting mitochondrial fusion. Its function is as follows. Isoforms that contain the alternative exon 4b are required for mitochondrial genome maintenance, possibly by anchoring the mitochondrial nucleoids to the inner mitochondrial membrane. This chain is Dynamin-like GTPase OPA1, mitochondrial, found in Homo sapiens (Human).